A 423-amino-acid chain; its full sequence is 26S proteasome regulatory subunit 6B homolog (423 aa).

207 to 214 (GPPGTGKT) lines the ATP pocket.

The protein belongs to the AAA ATPase family.

It localises to the cytoplasm. Its subcellular location is the nucleus. Functionally, the 26S proteasome is involved in the ATP-dependent degradation of ubiquitinated proteins. The regulatory (or ATPase) complex confers ATP dependency and substrate specificity to the 26S complex. This is 26S proteasome regulatory subunit 6B homolog (tbpA) from Aspergillus niger.